A 213-amino-acid polypeptide reads, in one-letter code: ATP synthase subunit b 2 (213 aa).

The tract at residues 1–45 (MFVTEAYAQSAPTVGETHTETPAVGQPQPEATHTETGVAHGAEHG) is disordered. A helical membrane pass occupies residues 57–76 (TYASQVLWLAITFGLFYLLM).

It belongs to the ATPase B chain family. F-type ATPases have 2 components, F(1) - the catalytic core - and F(0) - the membrane proton channel. F(1) has five subunits: alpha(3), beta(3), gamma(1), delta(1), epsilon(1). F(0) has three main subunits: a(1), b(2) and c(10-14). The alpha and beta chains form an alternating ring which encloses part of the gamma chain. F(1) is attached to F(0) by a central stalk formed by the gamma and epsilon chains, while a peripheral stalk is formed by the delta and b chains.

The protein localises to the cell inner membrane. Its function is as follows. F(1)F(0) ATP synthase produces ATP from ADP in the presence of a proton or sodium gradient. F-type ATPases consist of two structural domains, F(1) containing the extramembraneous catalytic core and F(0) containing the membrane proton channel, linked together by a central stalk and a peripheral stalk. During catalysis, ATP synthesis in the catalytic domain of F(1) is coupled via a rotary mechanism of the central stalk subunits to proton translocation. Functionally, component of the F(0) channel, it forms part of the peripheral stalk, linking F(1) to F(0). The b'-subunit is a diverged and duplicated form of b found in plants and photosynthetic bacteria. In Agrobacterium fabrum (strain C58 / ATCC 33970) (Agrobacterium tumefaciens (strain C58)), this protein is ATP synthase subunit b 2 (atpF2).